The chain runs to 234 residues: Probable chemoreceptor glutamine deamidase CheD 1 (234 aa).

The disordered stretch occupies residues 183–234 (AREAAGPRGERAARARPRVELFGTPAPKAQATPRIELFGTRATQPATRKQEA). Residues 190 to 201 (RGERAARARPRV) show a composition bias toward basic and acidic residues. Over residues 223–234 (RATQPATRKQEA) the composition is skewed to polar residues.

The protein belongs to the CheD family.

It carries out the reaction L-glutaminyl-[protein] + H2O = L-glutamyl-[protein] + NH4(+). Functionally, probably deamidates glutamine residues to glutamate on methyl-accepting chemotaxis receptors (MCPs), playing an important role in chemotaxis. This Burkholderia thailandensis (strain ATCC 700388 / DSM 13276 / CCUG 48851 / CIP 106301 / E264) protein is Probable chemoreceptor glutamine deamidase CheD 1.